Consider the following 501-residue polypeptide: Lysine--tRNA ligase (501 aa).

Mg(2+) is bound by residues Glu-410 and Glu-417.

It belongs to the class-II aminoacyl-tRNA synthetase family. In terms of assembly, homodimer. It depends on Mg(2+) as a cofactor.

Its subcellular location is the cytoplasm. It catalyses the reaction tRNA(Lys) + L-lysine + ATP = L-lysyl-tRNA(Lys) + AMP + diphosphate. The sequence is that of Lysine--tRNA ligase from Shewanella halifaxensis (strain HAW-EB4).